The primary structure comprises 273 residues: SPRY domain-containing SOCS box protein 1 (273 aa).

The residue at position 31 (tyrosine 31) is a Phosphotyrosine. The 199-residue stretch at 33 to 231 (KPTRLDLLLD…IRMRYLNGLD (199 aa)) folds into the B30.2/SPRY domain. The SOCS box domain maps to 232 to 273 (PEPLPLMDLCRRSVRLALGKERLGAIPALPLPASLKAYLLYQ).

Belongs to the SPSB family. As to quaternary structure, component of the probable ECS(SPSB1) E3 ubiquitin-protein ligase complex which contains CUL5, RNF7/RBX2, Elongin BC complex and SPSB1. Interacts with CUL5, RNF7, ELOB and ELOC. Directly interacts with MET tyrosine kinase domain in the presence and in the absence of HGF, however HGF treatment has a positive effect on this interaction. When phosphorylated, interacts with RASA1 without affecting its stability. Interacts (via B30.2/SPRY domain) with PAWR; this interaction is direct and occurs in association with the Elongin BC complex. Interacts with EPHB2. Interacts with NOS2.

The protein resides in the cytoplasm. Its subcellular location is the cytosol. The protein operates within protein modification; protein ubiquitination. In terms of biological role, substrate recognition component of a SCF-like ECS (Elongin BC-CUL2/5-SOCS-box protein) E3 ubiquitin-protein ligase complex which mediates the ubiquitination and subsequent proteasomal degradation of target proteins. Negatively regulates nitric oxide (NO) production and limits cellular toxicity in activated macrophages by mediating the ubiquitination and proteasomal degradation of NOS2. Acts as a bridge which links the NOS2 with the ECS E3 ubiquitin ligase complex components ELOC and CUL5. The protein is SPRY domain-containing SOCS box protein 1 (Spsb1) of Mus musculus (Mouse).